The following is a 157-amino-acid chain: NudC domain-containing protein 2 (157 aa).

Position 2 is an N-acetylserine (Ser2). Residues 14–104 (CGTPWGQWYQ…DAANCWTSLL (91 aa)) enclose the CS domain. The segment at 134-157 (FDFSGAEISGNYTKGGPDFSNLEK) is disordered. Phosphoserine is present on Ser142. Tyr145 carries the phosphotyrosine modification.

Interacts with LIS1.

It localises to the chromosome. Its subcellular location is the centromere. The protein localises to the kinetochore. The protein resides in the cytoplasm. It is found in the cytoskeleton. It localises to the microtubule organizing center. Its subcellular location is the centrosome. The protein localises to the spindle pole. May regulate the LIS1/dynein pathway by stabilizing LIS1 with Hsp90 chaperone. The protein is NudC domain-containing protein 2 (NUDCD2) of Homo sapiens (Human).